The following is a 954-amino-acid chain: Kinesin-like protein KIN-14Q (954 aa).

In terms of domain architecture, Calponin-homology (CH) spans 33-155 (AMRRYDAASW…CVLALKSFSE (123 aa)). Positions 374–699 (NIRVYCRVRP…LKFAERVASV (326 aa)) constitute a Kinesin motor domain. 457 to 464 (GQTGSGKT) provides a ligand contact to ATP. A coiled-coil region spans residues 704 to 733 (AKANKEGSEVRELKEQIATLKAALAKKEGE). Basic and acidic residues predominate over residues 844-855 (YDPDKQRRRAEP). Disordered regions lie at residues 844-876 (YDPD…DQEM) and 912-954 (PNLA…NTPK). The span at 864–873 (FDAATSSPSD) shows a compositional bias: low complexity. The span at 928–954 (PIRNSKQLPFSTTGGRRTRNGKINTPK) shows a compositional bias: polar residues.

This sequence belongs to the TRAFAC class myosin-kinesin ATPase superfamily. Kinesin family. KIN-14 subfamily. In terms of assembly, forms oligomers in vitro. Interacts with actin microfilaments. Binds to actin in vitro through its calponin-homology (CH) domain. As to expression, expressed in primary leaf, primary root, developing flower and coleoptile.

It localises to the cytoplasm. The protein localises to the cytoskeleton. Its activity is regulated as follows. The microtubule-dependent ATPase activity is regulated by actin binding. Functionally, minus end-directed motor protein that transports actin filaments along microtubules. Plays a central role in the polar orientation of actin filaments along microtubules, and thus a contribution to the organization of the cytoskeletal architecture. Links the actin microfilaments with the cortical microtubules in both cycling and non-cycling cells. Required for efficient cell elongation by its participation in the premitotic nuclear positioning. In Oryza sativa subsp. japonica (Rice), this protein is Kinesin-like protein KIN-14Q.